A 265-amino-acid polypeptide reads, in one-letter code: Hydroxyethylthiazole kinase (265 aa).

Methionine 41 is a substrate binding site. Residues arginine 117 and serine 163 each coordinate ATP. Glycine 190 serves as a coordination point for substrate.

The protein belongs to the Thz kinase family. Mg(2+) is required as a cofactor.

The catalysed reaction is 5-(2-hydroxyethyl)-4-methylthiazole + ATP = 4-methyl-5-(2-phosphooxyethyl)-thiazole + ADP + H(+). The protein operates within cofactor biosynthesis; thiamine diphosphate biosynthesis; 4-methyl-5-(2-phosphoethyl)-thiazole from 5-(2-hydroxyethyl)-4-methylthiazole: step 1/1. In terms of biological role, catalyzes the phosphorylation of the hydroxyl group of 4-methyl-5-beta-hydroxyethylthiazole (THZ). The polypeptide is Hydroxyethylthiazole kinase (Pediococcus pentosaceus (strain ATCC 25745 / CCUG 21536 / LMG 10740 / 183-1w)).